Here is a 572-residue protein sequence, read N- to C-terminus: SHUGOSHIN 1 (572 aa).

The stretch at 59–110 (KHQQQAILISSKENAENLQKENTKLMKVVMERDGIKSDLKKLRIEFQKVQEQ) forms a coiled coil. 4 disordered regions span residues 185–221 (DADHEHASGSSNANSLQRNEKANSKRRVSGRKNPANS), 244–285 (KLVS…QTET), 333–352 (ARLKSQEPEPSESFHDSIET), and 484–572 (SRRQ…RGGF). The segment covering 192–201 (SGSSNANSLQ) has biased composition (polar residues). Basic and acidic residues-rich tracts occupy residues 244-257 (KLVSDSDNDAENHI), 336-352 (KSQEPEPSESFHDSIET), 523-542 (ELKRESKKKPTGDESEEMRK), and 552-572 (AAEKIKSYKEPSLKEKMRGGF).

Belongs to the shugoshin family.

In terms of biological role, protects sister chromatid centromere cohesion in meiosis I but not through the protection of the cohesin SYN1. Required with SGO2 for full protection of centromeric cohesion during anaphase I. Required to prevent precocious release of pericentromeric cohesins during meiosis. Not necessary for the maintenance of the synaptonemal complex (SC). Not required for monopolar spindle orientation in meiosis I. The chain is SHUGOSHIN 1 from Arabidopsis thaliana (Mouse-ear cress).